A 189-amino-acid polypeptide reads, in one-letter code: dCTP deaminase (189 aa).

DCTP is bound by residues 112–117, 136–138, Q157, Y171, and Q181; these read KSTYAR and TLE. E138 serves as the catalytic Proton donor/acceptor.

It belongs to the dCTP deaminase family. In terms of assembly, homotrimer.

The enzyme catalyses dCTP + H2O + H(+) = dUTP + NH4(+). It functions in the pathway pyrimidine metabolism; dUMP biosynthesis; dUMP from dCTP (dUTP route): step 1/2. Functionally, catalyzes the deamination of dCTP to dUTP. This Acinetobacter baumannii (strain SDF) protein is dCTP deaminase.